Here is a 312-residue protein sequence, read N- to C-terminus: Glycerol-3-phosphate phosphatase (312 aa).

Residue aspartate 30 is the Nucleophile of the active site. 3 residues coordinate Mg(2+): aspartate 30, aspartate 32, and aspartate 251. Catalysis depends on aspartate 32, which acts as the Proton donor.

The protein belongs to the HAD-like hydrolase superfamily. CbbY/CbbZ/Gph/YieH family. In terms of assembly, homodimer. Mg(2+) is required as a cofactor.

The catalysed reaction is O-phospho-L-tyrosyl-[protein] + H2O = L-tyrosyl-[protein] + phosphate. It carries out the reaction sn-glycerol 1-phosphate + H2O = glycerol + phosphate. It catalyses the reaction sn-glycerol 3-phosphate + H2O = glycerol + phosphate. Functionally, glycerol-3-phosphate phosphatase hydrolyzing glycerol-3-phosphate into glycerol. Thereby, regulates the cellular levels of glycerol-3-phosphate a metabolic intermediate of glucose, lipid and energy metabolism. Was also shown to have a 2-phosphoglycolate phosphatase activity and a tyrosine-protein phosphatase activity. However, their physiological relevance is unclear. In vitro, also has a phosphatase activity toward ADP, ATP, GDP and GTP. In Gallus gallus (Chicken), this protein is Glycerol-3-phosphate phosphatase.